The chain runs to 222 residues: Cytidylate kinase (222 aa).

9 to 17 (GPAGSGKTT) provides a ligand contact to ATP.

Belongs to the cytidylate kinase family. Type 1 subfamily.

The protein localises to the cytoplasm. The catalysed reaction is CMP + ATP = CDP + ADP. It carries out the reaction dCMP + ATP = dCDP + ADP. This Thermosipho africanus (strain TCF52B) protein is Cytidylate kinase.